The primary structure comprises 481 residues: UDP-N-acetylmuramoyl-L-alanyl-D-glutamate--L-lysine ligase (481 aa).

Position 42 (S42) interacts with UDP-N-acetyl-alpha-D-muramoyl-L-alanyl-D-glutamate. 118–124 (GTKGKTT) serves as a coordination point for ATP. UDP-N-acetyl-alpha-D-muramoyl-L-alanyl-D-glutamate-binding positions include N158, 160 to 161 (TT), S187, and R195. K229 carries the N6-carboxylysine modification. Residues 404–407 (DDPN) carry the L-lysine recognition motif motif.

This sequence belongs to the MurCDEF family. MurE subfamily. Carboxylation is probably crucial for Mg(2+) binding and, consequently, for the gamma-phosphate positioning of ATP.

The protein localises to the cytoplasm. The catalysed reaction is UDP-N-acetyl-alpha-D-muramoyl-L-alanyl-D-glutamate + L-lysine + ATP = UDP-N-acetyl-alpha-D-muramoyl-L-alanyl-gamma-D-glutamyl-L-lysine + ADP + phosphate + H(+). It participates in cell wall biogenesis; peptidoglycan biosynthesis. Functionally, catalyzes the addition of L-lysine to the nucleotide precursor UDP-N-acetylmuramoyl-L-alanyl-D-glutamate (UMAG) in the biosynthesis of bacterial cell-wall peptidoglycan. The protein is UDP-N-acetylmuramoyl-L-alanyl-D-glutamate--L-lysine ligase of Streptococcus thermophilus (strain ATCC BAA-491 / LMD-9).